We begin with the raw amino-acid sequence, 475 residues long: Ribulose bisphosphate carboxylase large chain (475 aa).

The propeptide occupies 1–2 (MS). The residue at position 3 (Pro3) is an N-acetylproline. Lys14 is modified (N6,N6,N6-trimethyllysine). Substrate-binding residues include Asn123 and Thr173. Lys175 functions as the Proton acceptor in the catalytic mechanism. Lys177 is a substrate binding site. Positions 201, 203, and 204 each coordinate Mg(2+). Lys201 bears the N6-carboxylysine mark. The Proton acceptor role is filled by His294. The substrate site is built by Arg295, His327, and Ser379.

The protein belongs to the RuBisCO large chain family. Type I subfamily. As to quaternary structure, heterohexadecamer of 8 large chains and 8 small chains; disulfide-linked. The disulfide link is formed within the large subunit homodimers. Mg(2+) is required as a cofactor. The disulfide bond which can form in the large chain dimeric partners within the hexadecamer appears to be associated with oxidative stress and protein turnover.

It localises to the plastid. The protein resides in the chloroplast. It carries out the reaction 2 (2R)-3-phosphoglycerate + 2 H(+) = D-ribulose 1,5-bisphosphate + CO2 + H2O. The catalysed reaction is D-ribulose 1,5-bisphosphate + O2 = 2-phosphoglycolate + (2R)-3-phosphoglycerate + 2 H(+). Its function is as follows. RuBisCO catalyzes two reactions: the carboxylation of D-ribulose 1,5-bisphosphate, the primary event in carbon dioxide fixation, as well as the oxidative fragmentation of the pentose substrate in the photorespiration process. Both reactions occur simultaneously and in competition at the same active site. This chain is Ribulose bisphosphate carboxylase large chain, found in Magnolia macrophylla (Bigleaf magnolia).